Reading from the N-terminus, the 387-residue chain is Probable G-protein coupled receptor 173 (387 aa).

The Extracellular segment spans residues 1-40 (MANGNASSDGPGNPLAAVVSTTGGVMGGAPSSAVSTYVKL). N-linked (GlcNAc...) asparagine glycosylation occurs at Asn-5. A helical transmembrane segment spans residues 41–61 (VLLGLIICISLVGNLVVSLLV). The Cytoplasmic portion of the chain corresponds to 62-87 (LRDRALHKAPYYFLLDLCLADTIRSA). A helical transmembrane segment spans residues 88 to 108 (VCFPFVLVSIKNGSAWTYSVL). The Extracellular segment spans residues 109–111 (SCK). The cysteines at positions 110 and 188 are disulfide-linked. A helical membrane pass occupies residues 112 to 132 (VVAFMAVLFCFHAAFMLFCIS). Residues 133 to 153 (VTRYMAIAHHRFYSKRMTFWT) lie on the Cytoplasmic side of the membrane. A helical membrane pass occupies residues 154 to 174 (CVAVVCMVWTLSVAMAFPPVF). Residues 175–202 (DVGTYKFIREEDQCIFEHRYFKANDTLG) lie on the Extracellular side of the membrane. Asn-198 carries N-linked (GlcNAc...) asparagine glycosylation. A helical transmembrane segment spans residues 203–223 (FMLMLAVLILATHVVYMKLLL). The Cytoplasmic portion of the chain corresponds to 224 to 301 (FEYKHRKMKP…FKAEKQLGRM (78 aa)). Residues 302 to 322 (FYVITLFFLVLWSPYIVACYW) traverse the membrane as a helical segment. The Extracellular portion of the chain corresponds to 323–335 (RVFVKACTIPHRY). A helical membrane pass occupies residues 336–356 (LSTTVWMSFAQAGVNPIICFF). At 357–387 (LNKDLKKGLLAHLPPCCRTPPQLPREPYCVM) the chain is on the cytoplasmic side.

Belongs to the G-protein coupled receptor 1 family.

It is found in the cell membrane. Its function is as follows. Is a receptor for the SMIM20 derived peptides Phoenixin-14 and Phoenixin-20. It mediates the Phoenixin-14 and Phoenixin-20 augmentation of gonadotropin-releasing hormone (GNRH) signaling in the hypothalamus and pituitary gland. In the ovary, it mediates the effects of Phoenixin-14 and Phoenixin-20 induced granulosa cell proliferation during follicular growth. The protein is Probable G-protein coupled receptor 173 (gpr173) of Danio rerio (Zebrafish).